The following is a 368-amino-acid chain: UDP-N-acetylglucosamine--N-acetylmuramyl-(pentapeptide) pyrophosphoryl-undecaprenol N-acetylglucosamine transferase (368 aa).

UDP-N-acetyl-alpha-D-glucosamine contacts are provided by residues 13–15 (TGG), Asn-124, Arg-167, Ser-195, and Gln-296.

It belongs to the glycosyltransferase 28 family. MurG subfamily.

The protein resides in the cell inner membrane. The enzyme catalyses di-trans,octa-cis-undecaprenyl diphospho-N-acetyl-alpha-D-muramoyl-L-alanyl-D-glutamyl-meso-2,6-diaminopimeloyl-D-alanyl-D-alanine + UDP-N-acetyl-alpha-D-glucosamine = di-trans,octa-cis-undecaprenyl diphospho-[N-acetyl-alpha-D-glucosaminyl-(1-&gt;4)]-N-acetyl-alpha-D-muramoyl-L-alanyl-D-glutamyl-meso-2,6-diaminopimeloyl-D-alanyl-D-alanine + UDP + H(+). Its pathway is cell wall biogenesis; peptidoglycan biosynthesis. Cell wall formation. Catalyzes the transfer of a GlcNAc subunit on undecaprenyl-pyrophosphoryl-MurNAc-pentapeptide (lipid intermediate I) to form undecaprenyl-pyrophosphoryl-MurNAc-(pentapeptide)GlcNAc (lipid intermediate II). This chain is UDP-N-acetylglucosamine--N-acetylmuramyl-(pentapeptide) pyrophosphoryl-undecaprenol N-acetylglucosamine transferase, found in Maricaulis maris (strain MCS10) (Caulobacter maris).